The following is a 218-amino-acid chain: Oxygen regulatory protein NreC (218 aa).

Residues 2–119 form the Response regulatory domain; it reads KIVIADDHAV…QLILAVRTVY (118 aa). Asp53 carries the post-translational modification 4-aspartylphosphate. Residues 149–214 form the HTH luxR-type domain; the sequence is SSDPFKILSK…ELVEYALKKK (66 aa). A DNA-binding region (H-T-H motif) is located at residues 173 to 192; that stretch reads NKDIAEKLFVSVKTVEAHKT.

Phosphorylated by NreB.

It localises to the cytoplasm. Functionally, member of the two-component regulatory system NreB/NreC involved in the control of dissimilatory nitrate/nitrite reduction in response to oxygen. Phosphorylated NreC binds to a GC-rich palindromic sequence at the promoters of the nitrate (narGHJI) and nitrite (nir) reductase operons, as well as the putative nitrate transporter gene narT, and activates their expression. The chain is Oxygen regulatory protein NreC (nreC) from Staphylococcus epidermidis (strain ATCC 12228 / FDA PCI 1200).